The following is a 267-amino-acid chain: tRNA pseudouridine synthase A (267 aa).

The active-site Nucleophile is the aspartate 51. A substrate-binding site is contributed by tyrosine 109.

It belongs to the tRNA pseudouridine synthase TruA family. In terms of assembly, homodimer.

It catalyses the reaction uridine(38/39/40) in tRNA = pseudouridine(38/39/40) in tRNA. Its function is as follows. Formation of pseudouridine at positions 38, 39 and 40 in the anticodon stem and loop of transfer RNAs. This chain is tRNA pseudouridine synthase A, found in Staphylococcus aureus (strain bovine RF122 / ET3-1).